The following is a 498-amino-acid chain: Envelop protein OPG153 (498 aa).

An intrachain disulfide couples cysteine 43 to cysteine 342. Residues alanine 352–phenylalanine 391 are disordered. Over residues threonine 355–aspartate 367 the composition is skewed to basic and acidic residues. The span at lysine 378–proline 390 shows a compositional bias: pro residues.

This sequence belongs to the orthopoxvirus OPG153 protein family. In terms of assembly, interacts with proteins OPG094 and OPG143. Interacts with OPG154. Interacts with OPG152. Interacts with host laminin.

Its subcellular location is the virion membrane. Its function is as follows. Envelop protein that mediates acid-dependent endocytosis into host cells. Plays an important role in endocytic entry of the virus by acting as an acid-sensitive membrane fusion suppressor. Low pH in host endosomes triggers conformational changes to allow de-repression of viral fusion complex activity and membrane fusion within vesicles. Also plays a role in bridging the mature virion with structural protein OPG152. This is Envelop protein OPG153 (Protein OPG153) from Variola virus (isolate Human/India/Ind3/1967) (VARV).